The following is a 543-amino-acid chain: Sodium-dependent lysophosphatidylcholine symporter 1 (543 aa).

Residues 1–14 (MAKGEGAESGSAAG) are compositionally biased toward low complexity. The interval 1 to 34 (MAKGEGAESGSAAGLLPTSILQSTERPAQVKKEP) is disordered. The Cytoplasmic segment spans residues 1 to 40 (MAKGEGAESGSAAGLLPTSILQSTERPAQVKKEPKKKKQQ). Residues 41 to 70 (LSVCNKLCYALGGAPYQVTGCALGFFLQIY) form a helical membrane-spanning segment. At 71 to 94 (LLDVAQKDEEVVFCFSSFQVGPFS) the chain is on the extracellular side. The helical transmembrane segment at 95–115 (ASIILFVGRAWDAITDPLVGL) threads the bilayer. The Cytoplasmic segment spans residues 116 to 127 (CISKSPWTCLGR). Residues 128 to 147 (LMPWIIFSTPLAVIAYFLIW) traverse the membrane as a helical segment. Topologically, residues 148-157 (FVPDFPHGQT) are extracellular. Residues 158–182 (YWYLLFYCLFETMVTCFHVPYSALT) form a helical membrane-spanning segment. The Cytoplasmic segment spans residues 183 to 189 (MFISTEQ). A helical transmembrane segment spans residues 190-221 (TERDSATAYRMTVEVLGTVLGTAIQGQIVGQA). Over 222–241 (DTPCFQDLNSSTVASQSANH) the chain is Extracellular. C225 and C473 are disulfide-bonded. Residues N230 and N240 are each glycosylated (N-linked (GlcNAc...) asparagine). Residues 242-275 (THGTTSHRETQKAYLLAAGVIVCIYIICAVILIL) form a helical membrane-spanning segment. Residues 276 to 306 (GVREQREPYEAQQSEPIAYFRGLRLVMSHGP) are Cytoplasmic-facing. Residues 307–333 (YIKLITGFLFTSLAFMLVEGNFVLFCT) traverse the membrane as a helical segment. Topologically, residues 334-344 (YTLGFRNEFQN) are extracellular. The helical transmembrane segment at 345–363 (LLLAIMLSATLTIPIWQWF) threads the bilayer. Residues 364-367 (LTRF) are Cytoplasmic-facing. A helical membrane pass occupies residues 368 to 389 (GKKTAVYVGISSAVPFLILVAL). Topologically, residues 390 to 392 (MES) are extracellular. The chain crosses the membrane as a helical span at residues 393-429 (NLIITYAVAVAAGISVAAAFLLPWSMLPDVIDDFHLK). Over 430-439 (QPHFHGTEPI) the chain is Cytoplasmic. Residues 440-466 (FFSFYVFFTKFASGVSLGISTLSLDFA) form a helical membrane-spanning segment. Residues 467–478 (GYQTRGCSQPER) are Extracellular-facing. The chain crosses the membrane as a helical span at residues 479–502 (VKFTLNMLVTMAPIVLILLGLLLF). Residues 503–543 (KMYPIDEERRRQNKKALQALRDEASSSGCSETDSTELASIL) are Cytoplasmic-facing.

It belongs to the major facilitator superfamily. As to quaternary structure, interacts with ERVFRD-1/syncytin-2. As to expression, in placenta, associated with trophoblast cells.

It localises to the cell membrane. Its subcellular location is the endoplasmic reticulum membrane. It carries out the reaction a 1-acyl-sn-glycero-3-phosphocholine(in) + Na(+)(in) = a 1-acyl-sn-glycero-3-phosphocholine(out) + Na(+)(out). The enzyme catalyses 1-(4Z,7Z,10Z,13Z,16Z,19Z-docosahexaenoyl)-sn-glycero-3-phosphocholine(in) + Na(+)(in) = 1-(4Z,7Z,10Z,13Z,16Z,19Z-docosahexaenoyl)-sn-glycero-3-phosphocholine(out) + Na(+)(out). It catalyses the reaction 1-(9Z-octadecenoyl)-sn-glycero-3-phosphocholine(in) + Na(+)(in) = 1-(9Z-octadecenoyl)-sn-glycero-3-phosphocholine(out) + Na(+)(out). The catalysed reaction is 1-hexadecanoyl-sn-glycero-3-phosphocholine(in) + Na(+)(in) = 1-hexadecanoyl-sn-glycero-3-phosphocholine(out) + Na(+)(out). It carries out the reaction a 1-acyl-sn-glycero-3-phosphoethanolamine(in) + Na(+)(in) = a 1-acyl-sn-glycero-3-phosphoethanolamine(out) + Na(+)(out). Sodium-dependent lysophosphatidylcholine (LPC) symporter, which plays an essential role for blood-brain barrier formation and function. Specifically expressed in endothelium of the blood-brain barrier of micro-vessels and transports LPC into the brain. Transport of LPC is essential because it constitutes the major mechanism by which docosahexaenoic acid (DHA), an omega-3 fatty acid that is essential for normal brain growth and cognitive function, enters the brain. Transports LPC carrying long-chain fatty acids such LPC oleate and LPC palmitate with a minimum acyl chain length of 14 carbons. Does not transport docosahexaenoic acid in unesterified fatty acid. Specifically required for blood-brain barrier formation and function, probably by mediating lipid transport. Not required for central nervous system vascular morphogenesis. Acts as a transporter for tunicamycin, an inhibitor of asparagine-linked glycosylation. In placenta, acts as a receptor for ERVFRD-1/syncytin-2 and is required for trophoblast fusion. This chain is Sodium-dependent lysophosphatidylcholine symporter 1, found in Homo sapiens (Human).